Consider the following 836-residue polypeptide: Ethylene receptor 3 (836 aa).

The next 3 helical transmembrane spans lie at 137–157 (LIAA…AGLR), 166–186 (LVQF…TAFT), and 204–224 (LTAL…PQLL). Residues Cys-176 and His-180 each contribute to the Cu cation site. The GAF domain occupies 269-413 (DRHTVLYTTL…VVAGQVAVAL (145 aa)). Positions 416–452 (ATLLEESRAMRDRLAEQNRELLQARRDALMANEARQA) form a coiled coil. One can recognise a Histidine kinase domain in the interval 457-691 (MSQGMRRPIH…LVLRFQLQSP (235 aa)). Residues 718–834 (LLIDDDDDIN…LKDELARILQ (117 aa)) enclose the Response regulatory domain.

This sequence belongs to the ethylene receptor family. It depends on Cu cation as a cofactor.

It is found in the endoplasmic reticulum membrane. It catalyses the reaction ATP + protein L-histidine = ADP + protein N-phospho-L-histidine.. In terms of biological role, ethylene receptor related to bacterial two-component regulators. Acts as a negative regulator of ethylene signaling. May delay the transition from the vegetative stage to the floral stage by up-regulating GI (GIGANTEA) and RCN1 and cause starch accumulation in stems by down-regulating the alpha-amylase AMY3D. The protein is Ethylene receptor 3 of Oryza sativa subsp. indica (Rice).